Reading from the N-terminus, the 195-residue chain is Large ribosomal subunit protein bL25 (195 aa).

It belongs to the bacterial ribosomal protein bL25 family. CTC subfamily. In terms of assembly, part of the 50S ribosomal subunit; part of the 5S rRNA/L5/L18/L25 subcomplex. Contacts the 5S rRNA. Binds to the 5S rRNA independently of L5 and L18.

Its function is as follows. This is one of the proteins that binds to the 5S RNA in the ribosome where it forms part of the central protuberance. This chain is Large ribosomal subunit protein bL25, found in Geobacter metallireducens (strain ATCC 53774 / DSM 7210 / GS-15).